The sequence spans 217 residues: N-(5'-phosphoribosyl)anthranilate isomerase (217 aa).

Belongs to the TrpF family.

The catalysed reaction is N-(5-phospho-beta-D-ribosyl)anthranilate = 1-(2-carboxyphenylamino)-1-deoxy-D-ribulose 5-phosphate. It functions in the pathway amino-acid biosynthesis; L-tryptophan biosynthesis; L-tryptophan from chorismate: step 3/5. The protein is N-(5'-phosphoribosyl)anthranilate isomerase of Synechococcus sp. (strain ATCC 27144 / PCC 6301 / SAUG 1402/1) (Anacystis nidulans).